The primary structure comprises 209 residues: Putative NAD(P)H nitroreductase YdgI (209 aa).

FMN contacts are provided by residues 14 to 16, 72 to 74, 161 to 162, and R199; these read RRS, QTQ, and GG.

This sequence belongs to the nitroreductase family. Requires FMN as cofactor.

This Bacillus subtilis (strain 168) protein is Putative NAD(P)H nitroreductase YdgI (ydgI).